We begin with the raw amino-acid sequence, 421 residues long: BEN domain-containing protein 5 (421 aa).

Lysine 133 is subject to N6-acetyllysine. Positions 180–243 (RALYEELLRN…LNRRLQDVLL (64 aa)) form a coiled coil. Lysine 258 participates in a covalent cross-link: Glycyl lysine isopeptide (Lys-Gly) (interchain with G-Cter in SUMO2). A BEN domain is found at 302 to 408 (GSGIWVDEEK…EKIMDINKSC (107 aa)).

Functionally, acts as a transcriptional repressor. The chain is BEN domain-containing protein 5 (BEND5) from Homo sapiens (Human).